The primary structure comprises 552 residues: DUF724 domain-containing protein 10 (552 aa).

A disordered region spans residues 308-361; the sequence is SSLTQGSGDKTEVETQRKTFPKKTLPRNQNGSGNDSTLENENSNRKRKREENLC. A compositionally biased stretch (polar residues) spans 333–348; sequence PRNQNGSGNDSTLENE. In terms of domain architecture, DUF724 spans 371–543; the sequence is ILFEKKLPVW…LEFQATASAP (173 aa).

As to expression, expressed at low levels in leaves, stems, flowers and siliques.

In terms of biological role, may be involved in the polar growth of plant cells via transportation of RNAs. The sequence is that of DUF724 domain-containing protein 10 from Arabidopsis thaliana (Mouse-ear cress).